The primary structure comprises 330 residues: Glycerol-3-phosphate dehydrogenase [NAD(P)+] (330 aa).

NADPH contacts are provided by Ser10, Trp11, Arg31, and Lys105. Residues Lys105, Gly135, and Ser137 each coordinate sn-glycerol 3-phosphate. NADPH is bound at residue Ala139. Sn-glycerol 3-phosphate contacts are provided by Lys190, Asp243, Ser253, Arg254, and Asn255. Lys190 functions as the Proton acceptor in the catalytic mechanism. Arg254 provides a ligand contact to NADPH. Residues Val278 and Glu280 each contribute to the NADPH site.

This sequence belongs to the NAD-dependent glycerol-3-phosphate dehydrogenase family.

Its subcellular location is the cytoplasm. The enzyme catalyses sn-glycerol 3-phosphate + NAD(+) = dihydroxyacetone phosphate + NADH + H(+). It carries out the reaction sn-glycerol 3-phosphate + NADP(+) = dihydroxyacetone phosphate + NADPH + H(+). The protein operates within membrane lipid metabolism; glycerophospholipid metabolism. Its function is as follows. Catalyzes the reduction of the glycolytic intermediate dihydroxyacetone phosphate (DHAP) to sn-glycerol 3-phosphate (G3P), the key precursor for phospholipid synthesis. The protein is Glycerol-3-phosphate dehydrogenase [NAD(P)+] of Oleidesulfovibrio alaskensis (strain ATCC BAA-1058 / DSM 17464 / G20) (Desulfovibrio alaskensis).